The primary structure comprises 425 residues: Protein UL117 (425 aa).

The disordered stretch occupies residues Pro-59 to Pro-83.

Belongs to the herpesviridae U84 family.

Its subcellular location is the host nucleus. Its function is as follows. Plays a role in the inhibition of host DNA replication in the infected cell. Targets the mini-chromosome maintenance (MCM) complex and blocks the accumulation of MCM proteins and their loading onto host chromatin. This Homo sapiens (Human) protein is Protein UL117 (UL117).